A 179-amino-acid chain; its full sequence is Large ribosomal subunit protein uL6c (179 aa).

The protein belongs to the universal ribosomal protein uL6 family. Part of the 50S ribosomal subunit.

Its subcellular location is the plastid. The protein localises to the cyanelle. Binds 23S rRNA. In Cyanophora paradoxa, this protein is Large ribosomal subunit protein uL6c (rpl6).